A 185-amino-acid polypeptide reads, in one-letter code: Transcriptional repressor NrdR (185 aa).

Residues 1-24 (MRCPFCGGPDTQVKDSRPSEDSSA) are disordered. The segment at 3–34 (CPFCGGPDTQVKDSRPSEDSSAIRRRRVCPDC) is a zinc-finger region. The span at 12 to 24 (QVKDSRPSEDSSA) shows a compositional bias: basic and acidic residues. One can recognise an ATP-cone domain in the interval 49-139 (LVVLKRSGKR…VYKNFREAQD (91 aa)). Residues 148-185 (GERLDGEGDLPEQGDAVPAPPDEAVAAPRRGRPARKRA) are disordered. The span at 176 to 185 (RRGRPARKRA) shows a compositional bias: basic residues.

This sequence belongs to the NrdR family. Zn(2+) is required as a cofactor.

In terms of biological role, negatively regulates transcription of bacterial ribonucleotide reductase nrd genes and operons by binding to NrdR-boxes. In Methylorubrum extorquens (strain CM4 / NCIMB 13688) (Methylobacterium extorquens), this protein is Transcriptional repressor NrdR.